The sequence spans 378 residues: 1-acyl-sn-glycerol-3-phosphate acyltransferase delta (378 aa).

A helical transmembrane segment spans residues 11–31 (FLCHLVFCYVFIASGLIVNAI). The HXXXXD motif motif lies at 96–101 (HKFEID). 3 helical membrane-spanning segments follow: residues 125-145 (ELAYVPIIGWMWYFVEMIFCT), 311-331 (WLFWASLLLYPFFQFLVSMVS), and 338-358 (LASLVLIFCMASMGVRWMIGV).

Belongs to the 1-acyl-sn-glycerol-3-phosphate acyltransferase family. In terms of tissue distribution, expressed at a high levels in the brain, at intermediate or low levels in skeletal muscles, gut, kidney, spleen and lung. Barely detectable in heart and liver.

The protein resides in the endoplasmic reticulum membrane. The catalysed reaction is a 1-acyl-sn-glycero-3-phosphate + an acyl-CoA = a 1,2-diacyl-sn-glycero-3-phosphate + CoA. The enzyme catalyses (4Z,7Z,10Z,13Z,16Z,19Z)-docosahexaenoyl-CoA + 1-hexadecanoyl-sn-glycero-3-phosphate = 1-hexadecanoyl-2-(4Z,7Z,10Z,13Z,16Z,19Z-docosahexaenoyl)-sn-glycero-3-phosphate + CoA. It carries out the reaction 1-octadecanoyl-sn-glycero-3-phosphate + (9Z,12Z)-octadecadienoyl-CoA = 1-octadecanoyl-2-(9Z,12Z-octadecadienoyl)-sn-glycero-3-phosphate + CoA. It catalyses the reaction 1-octadecanoyl-sn-glycero-3-phosphate + (4Z,7Z,10Z,13Z,16Z,19Z)-docosahexaenoyl-CoA = 1-octadecanoyl-2-(4Z,7Z,10Z,13Z,16Z,19Z-docosahexaenoyl)-sn-glycero-3-phosphate + CoA. The catalysed reaction is (4Z,7Z,10Z,13Z,16Z,19Z)-docosahexaenoyl-CoA + 1-(9Z-octadecenoyl)-sn-glycero-3-phosphate = 1-(9Z-octadecenoyl)-2-(4Z,7Z,10Z,13Z,16Z,19Z-docosahexaenoyl)-sn-glycero-3-phosphate + CoA. The protein operates within phospholipid metabolism; CDP-diacylglycerol biosynthesis; CDP-diacylglycerol from sn-glycerol 3-phosphate: step 2/3. Its function is as follows. Converts 1-acyl-sn-glycerol-3-phosphate (lysophosphatidic acid or LPA) into 1,2-diacyl-sn-glycerol-3-phosphate (phosphatidic acid or PA) by incorporating an acyl moiety at the sn-2 position of the glycerol backbone. Exhibits high acyl-CoA specificity for polyunsaturated fatty acyl-CoA, especially docosahexaenoyl-CoA (22:6-CoA, DHA-CoA). This chain is 1-acyl-sn-glycerol-3-phosphate acyltransferase delta (Agpat4), found in Mus musculus (Mouse).